The following is a 596-amino-acid chain: Transcription factor COE3 (596 aa).

Positions 1–22 (MFGIQENIPRGGTTMKEEPLGS) are disordered. Residues 63–66 (RKSN) form an interaction with DNA region. The segment at 151–170 (CRVLLTHEIMCSRCCDKKSC) adopts a C5-type zinc-finger fold. Interaction with DNA stretches follow at residues 197–204 (NCLKNAGN) and 236–239 (NNSK). Residues 263–346 (PCIKAISPSE…KGAPGRFVYT (84 aa)) form the IPT/TIG domain. Positions 451–483 (TSQANDQVGYSRNTSSVSPRGYVPSSTPQQSNY) are disordered.

Belongs to the COE family. Forms either a homodimer or a heterodimer with a related family member. In terms of tissue distribution, expressed in brain.

The protein resides in the nucleus. Transcriptional activator. Recognizes variations of the palindromic sequence 5'-ATTCCCNNGGGAATT-3'. The chain is Transcription factor COE3 (EBF3) from Homo sapiens (Human).